Consider the following 60-residue polypeptide: MRLIIPRRGDNHCLNTNQSINMDSILDASAGLESLIRSNSIVLSNSFEECIVLYNNYTFK.

This is an uncharacterized protein from Dictyostelium discoideum (Social amoeba).